Reading from the N-terminus, the 250-residue chain is UPF0259 membrane protein Spro_2675 (250 aa).

The next 6 membrane-spanning stretches (helical) occupy residues 23 to 43 (ILML…AFSP), 87 to 107 (AATF…LTLI), 132 to 152 (LLLL…LFVV), 156 to 176 (IMAI…KGVF), 192 to 212 (VIVP…FMVS), and 222 to 242 (ASVV…IYLF).

Belongs to the UPF0259 family.

Its subcellular location is the cell inner membrane. The sequence is that of UPF0259 membrane protein Spro_2675 from Serratia proteamaculans (strain 568).